Reading from the N-terminus, the 356-residue chain is S-adenosylmethionine:tRNA ribosyltransferase-isomerase (356 aa).

Belongs to the QueA family. Monomer.

The protein resides in the cytoplasm. The catalysed reaction is 7-aminomethyl-7-carbaguanosine(34) in tRNA + S-adenosyl-L-methionine = epoxyqueuosine(34) in tRNA + adenine + L-methionine + 2 H(+). It participates in tRNA modification; tRNA-queuosine biosynthesis. In terms of biological role, transfers and isomerizes the ribose moiety from AdoMet to the 7-aminomethyl group of 7-deazaguanine (preQ1-tRNA) to give epoxyqueuosine (oQ-tRNA). In Escherichia coli (strain 55989 / EAEC), this protein is S-adenosylmethionine:tRNA ribosyltransferase-isomerase.